The following is a 234-amino-acid chain: Large ribosomal subunit protein uL3 (234 aa).

The tract at residues 137 to 156 (AGHGVERKHRSPGSVGGCAT) is disordered.

Belongs to the universal ribosomal protein uL3 family. Part of the 50S ribosomal subunit. Forms a cluster with proteins L14 and L19.

Functionally, one of the primary rRNA binding proteins, it binds directly near the 3'-end of the 23S rRNA, where it nucleates assembly of the 50S subunit. This Frankia alni (strain DSM 45986 / CECT 9034 / ACN14a) protein is Large ribosomal subunit protein uL3.